Consider the following 543-residue polypeptide: Cytochrome P450 52A1 (543 aa).

Topologically, residues 1 to 28 are lumenal; it reads MSSSPSIAQEFLATITPYVEYCQENYTK. Residues 29–48 form a helical membrane-spanning segment; it reads WYYFIPLVILSLNLISMLHT. The Cytoplasmic segment spans residues 49 to 543; sequence KYLERKFKAK…GAEVQMYLIL (495 aa). C487 contributes to the heme binding site.

This sequence belongs to the cytochrome P450 family. The cofactor is heme.

It localises to the endoplasmic reticulum membrane. Functionally, together with an NADPH cytochrome P450 the enzyme system catalyzes the terminal hydroxylation as the first step in the assimilation of alkanes and fatty acids. In Candida tropicalis (Yeast), this protein is Cytochrome P450 52A1 (CYP52A1).